Consider the following 430-residue polypeptide: Mitochondrial distribution and morphology protein 10 (430 aa).

A compositionally biased stretch (polar residues) spans 215–234; that stretch reads SSSAMNPPSGTSASETNGSG. Disordered regions lie at residues 215-237 and 339-393; these read SSSA…GPSV and LGAN…GPKE.

The protein belongs to the MDM10 family. In terms of assembly, component of the ER-mitochondria encounter structure (ERMES) or MDM complex, composed of MMM1, MDM10, MDM12 and MDM34. Associates with the mitochondrial outer membrane sorting assembly machinery SAM(core) complex.

The protein resides in the mitochondrion outer membrane. Component of the ERMES/MDM complex, which serves as a molecular tether to connect the endoplasmic reticulum and mitochondria. Components of this complex are involved in the control of mitochondrial shape and protein biogenesis and may function in phospholipid exchange. MDM10 is involved in the late assembly steps of the general translocase of the mitochondrial outer membrane (TOM complex). Functions in the TOM40-specific route of the assembly of outer membrane beta-barrel proteins, including the association of TOM40 with the receptor TOM22 and small TOM proteins. Can associate with the SAM(core) complex as well as the MDM12-MMM1 complex, both involved in late steps of the major beta-barrel assembly pathway, that is responsible for biogenesis of all outer membrane beta-barrel proteins. May act as a switch that shuttles between both complexes and channels precursor proteins into the TOM40-specific pathway. Plays a role in mitochondrial morphology and in the inheritance of mitochondria. This chain is Mitochondrial distribution and morphology protein 10, found in Chaetomium globosum (strain ATCC 6205 / CBS 148.51 / DSM 1962 / NBRC 6347 / NRRL 1970) (Soil fungus).